A 556-amino-acid polypeptide reads, in one-letter code: Urocanate hydratase (556 aa).

NAD(+) is bound by residues 52–53, Gln130, 176–178, Glu196, Arg201, 242–243, 263–267, 273–274, and Tyr322; these read GG, GMG, NA, QTSAH, and YL. The active site involves Cys410. Gly492 provides a ligand contact to NAD(+).

Belongs to the urocanase family. Requires NAD(+) as cofactor.

It localises to the cytoplasm. It catalyses the reaction 4-imidazolone-5-propanoate = trans-urocanate + H2O. It participates in amino-acid degradation; L-histidine degradation into L-glutamate; N-formimidoyl-L-glutamate from L-histidine: step 2/3. Functionally, catalyzes the conversion of urocanate to 4-imidazolone-5-propionate. This is Urocanate hydratase from Shewanella sp. (strain MR-7).